A 431-amino-acid polypeptide reads, in one-letter code: Selenocysteine lyase (431 aa).

Lysine 239 is modified (N6-(pyridoxal phosphate)lysine). The S-selanylcysteine intermediate role is filled by cysteine 367.

It belongs to the class-V pyridoxal-phosphate-dependent aminotransferase family. As to quaternary structure, homodimer. Requires pyridoxal 5'-phosphate as cofactor.

Its subcellular location is the cytoplasm. It is found in the cytosol. The enzyme catalyses L-selenocysteine + AH2 = hydrogenselenide + L-alanine + A + H(+). In terms of biological role, catalyzes the decomposition of L-selenocysteine to L-alanine and elemental selenium. The polypeptide is Selenocysteine lyase (scly) (Xenopus tropicalis (Western clawed frog)).